A 404-amino-acid polypeptide reads, in one-letter code: Glucose-1-phosphate adenylyltransferase (404 aa).

Residues Tyr-99, Gly-164, 179-180 (EK), and Ser-197 contribute to the alpha-D-glucose 1-phosphate site.

Belongs to the bacterial/plant glucose-1-phosphate adenylyltransferase family. As to quaternary structure, homotetramer.

The enzyme catalyses alpha-D-glucose 1-phosphate + ATP + H(+) = ADP-alpha-D-glucose + diphosphate. The protein operates within glycan biosynthesis; glycogen biosynthesis. In terms of biological role, involved in the biosynthesis of ADP-glucose, a building block required for the elongation reactions to produce glycogen. Catalyzes the reaction between ATP and alpha-D-glucose 1-phosphate (G1P) to produce pyrophosphate and ADP-Glc. The chain is Glucose-1-phosphate adenylyltransferase from Nocardia farcinica (strain IFM 10152).